A 152-amino-acid polypeptide reads, in one-letter code: Ribosome maturation factor RimP (152 aa).

Belongs to the RimP family.

Its subcellular location is the cytoplasm. In terms of biological role, required for maturation of 30S ribosomal subunits. This chain is Ribosome maturation factor RimP, found in Teredinibacter turnerae (strain ATCC 39867 / T7901).